The chain runs to 309 residues: Carbonic anhydrase 4 (309 aa).

An N-terminal signal peptide occupies residues 1-17 (MQLLLALLALAYVAPST). Residues 20 to 282 (SHWCYEIQAK…LGNRQVFRSH (263 aa)) form the Alpha-carbonic anhydrase domain. 2 disulfides stabilise this stretch: Cys-23–Cys-35 and Cys-45–Cys-226. His-87 functions as the Proton donor/acceptor in the catalytic mechanism. The Zn(2+) site is built by His-114, His-116, and His-139. An N-linked (GlcNAc...) asparagine glycan is attached at Asn-193. Residue 222–223 (TT) participates in substrate binding. Residue Ser-281 is the site of GPI-anchor amidated serine attachment. Residues 282-309 (HASGRLLSLPLPTLLVPTLTCLVASFLH) constitute a propeptide, removed in mature form.

It belongs to the alpha-carbonic anhydrase family. Interacts with SLC4A4. Zn(2+) is required as a cofactor. Post-translationally, the N-terminus is blocked. Glycosylated. In terms of tissue distribution, present in kidney and lung. Also particularly abundant in brain, muscle, heart and liver. Not detected in skin or spleen.

It localises to the cell membrane. The enzyme catalyses hydrogencarbonate + H(+) = CO2 + H2O. Inhibited by acetazolamide. In terms of biological role, catalyzes the reversible hydration of carbon dioxide into bicarbonate and protons and thus is essential to maintaining intracellular and extracellular pH. May stimulate the sodium/bicarbonate transporter activity of SLC4A4 that acts in pH homeostasis. It is essential for acid overload removal from the retina and retina epithelium, and acid release in the choriocapillaris in the choroid. In Rattus norvegicus (Rat), this protein is Carbonic anhydrase 4 (Ca4).